Here is a 490-residue protein sequence, read N- to C-terminus: MSDRGRTLMVQGTTSDAGKSTLVTALCRWLARRGVAVVPFKPQNMALNSAVTADGGEIGRAQAVQAQACRLAPHTDMNPVLLKPNTDIGAQVIIHGRAVTSMDAAAYHDYKRVAMEAVLASHGRLAAAYRVVMVEGAGSPAEINLRANDIANMGFAEAVDCPVILVADIDRGGVFAHLVGTLELLSDSERERVKGFVINRFRGDIALLQPGLDWLEARTGKPVLGVLPYVSDLHLEAEDAIDTRQAAKVGPRLKVVVPVLPRISNHTDFDPLRLHPQVELSFVGPGQALPSADLIVLPGSKSVRADLAALRERGWDEAILRHLRYGGRLLGICGGLQMLGERLHDPLGLEGAAGSSAGLGLLALETTLEADKQLRNVQGRLSLEDAPLSGYEIHAGVTRGEALARPAVVLDDGRADGARSVDGNVMGTYLHGLFESTAACSALLRWAGLREVQAVDYQALRERDIERLADLVERHLDTGRLLALCGEPHA.

The region spanning 252–439 (RLKVVVPVLP…LHGLFESTAA (188 aa)) is the GATase cobBQ-type domain. Cys-333 acts as the Nucleophile in catalysis. His-431 is a catalytic residue.

The protein belongs to the CobB/CobQ family. CobQ subfamily.

It functions in the pathway cofactor biosynthesis; adenosylcobalamin biosynthesis. Catalyzes amidations at positions B, D, E, and G on adenosylcobyrinic A,C-diamide. NH(2) groups are provided by glutamine, and one molecule of ATP is hydrogenolyzed for each amidation. The chain is Cobyric acid synthase from Pseudomonas aeruginosa (strain ATCC 15692 / DSM 22644 / CIP 104116 / JCM 14847 / LMG 12228 / 1C / PRS 101 / PAO1).